The primary structure comprises 221 residues: Transcription repressor OFP8 (221 aa).

The segment covering 124–138 (EDEGDKEESEDDDSD) has biased composition (acidic residues). The tract at residues 124-147 (EDEGDKEESEDDDSDTLFSSRSFS) is disordered. The OVATE domain occupies 158 to 217 (VVKKSKDPYEDFRTSMVEMIVERQIFAPAELQQLLQCFLSLNSRQHHKVIVQVFLEIYAT).

In terms of tissue distribution, expressed in roots, rosette and cauline leaves, shoots, stems, flower buds and siliques.

It localises to the nucleus. Transcriptional repressor that regulates multiple aspects of plant growth and development through the regulation of BEL1-LIKE (BLH) and KNOX TALE (KNAT) homeodomain transcription factors. This Arabidopsis thaliana (Mouse-ear cress) protein is Transcription repressor OFP8 (OFP8).